A 480-amino-acid chain; its full sequence is Type VI lipase adapter protein Tla3 (480 aa).

A disordered region spans residues 410-458 (ISSPTPGKKPVHDPFGVDLLPQTASGDGPPPSADPVAPASRLTTRLPPG).

In terms of assembly, interacts with the Tle3 toxin on one side and with the H2-T6SS component VgrG2b on the other side.

The protein resides in the cytoplasm. Functionally, adapter protein that targets and loads the Tle3 toxin onto the H2 type VI secretion system (H2-T6SS) machinery through an interaction with the TTR domain of VgrG2b. Seems specific for Tle3. This chain is Type VI lipase adapter protein Tla3, found in Pseudomonas aeruginosa (strain ATCC 15692 / DSM 22644 / CIP 104116 / JCM 14847 / LMG 12228 / 1C / PRS 101 / PAO1).